A 619-amino-acid polypeptide reads, in one-letter code: Cationic amino acid transporter 3 (619 aa).

At 1 to 36 the chain is on the cytoplasmic side; sequence MLWQALRRFGQKLVRRRLLELGMGETRLARCLSTLD. A helical transmembrane segment spans residues 37–57; that stretch reads LVALGVGSTLGAGVYVLAGEV. Residues 58–61 lie on the Extracellular side of the membrane; sequence AKEK. Residues 62 to 82 form a helical membrane-spanning segment; it reads AGPSIVICFLVAALSSVLAGL. Residues 83–107 are Cytoplasmic-facing; that stretch reads CYAEFGARVPGSGSAYLYSYVTVGE. Residues 108–128 traverse the membrane as a helical segment; sequence LWAFTTGWNLILSYVIGTASV. Over 129 to 162 the chain is Extracellular; sequence ARAWSSAFDNLIGNHISQTLKGTILLNMPHVLAE. The chain crosses the membrane as a helical span at residues 163 to 183; sequence YPDFFALALVLLLTGLLVLGA. At 184–191 the chain is on the cytoplasmic side; it reads NESGLVTK. The chain crosses the membrane as a helical span at residues 192 to 212; the sequence is VFTGMNLLVLGFVIISGFIKG. The Extracellular segment spans residues 213–244; the sequence is ELRNWKLTKEDYCLTMSESNGTCSLDSMGSGG. Asn-232 is a glycosylation site (N-linked (GlcNAc...) asparagine). Residues 245–265 form a helical membrane-spanning segment; that stretch reads FMPFGLEGILRGAATCFYAFV. Topologically, residues 266–285 are cytoplasmic; that stretch reads GFDCIATTGEEAQNPQRSIP. Residues 286–306 form a helical membrane-spanning segment; the sequence is MGIVISLSICFLAYFGVSSAL. Topologically, residues 307–335 are extracellular; sequence TLMMPYYKLQPESPLPEAFTYVGWEPARY. Residues 336-356 form a helical membrane-spanning segment; it reads LVAIGSLCALSTSLLGSMFPM. Residues 357–382 are Cytoplasmic-facing; that stretch reads PRVIYAMAEDGLLFRVLARVHNGTHT. Residues 383–403 form a helical membrane-spanning segment; the sequence is PIVATVVSGVIAAFMAFLFEL. Over 404 to 406 the chain is Extracellular; that stretch reads TDL. The helical transmembrane segment at 407 to 427 threads the bilayer; it reads VDLMSIGTLLAYSLVSICVLI. At 428–475 the chain is on the cytoplasmic side; sequence LRYQPDQEMKNGEEEVELQEERTLEAEKLTVQALFCQVDSIPTLLSGR. A helical transmembrane segment spans residues 476-496; sequence IVYVCSSLLAVLLTVLCLVLT. Topologically, residues 497-507 are extracellular; that stretch reads WWTTPLHSGDP. A helical membrane pass occupies residues 508 to 528; sequence VWVTVVVLILGLILGISGVIW. At 529–540 the chain is on the cytoplasmic side; that stretch reads RQPQNRTPLHFK. Residues 541–561 form a helical membrane-spanning segment; the sequence is VPVVPLLPLVSIFVNVYLMMQ. Residues 562–569 are Extracellular-facing; the sequence is MTADTWAR. The helical transmembrane segment at 570-590 threads the bilayer; it reads FGVWMLIGFAIYFGYGIQHSV. Topologically, residues 591 to 619 are cytoplasmic; the sequence is EEVKNHQTLPKTRPQTIDLDLTTSCVHSI. A Phosphothreonine modification is found at Thr-606. Ser-618 carries the post-translational modification Phosphoserine.

The protein belongs to the amino acid-polyamine-organocation (APC) superfamily. Cationic amino acid transporter (CAT) (TC 2.A.3.3) family. In terms of processing, N-glycosylated. As to expression, highly expressed in brain.

It localises to the cell membrane. It carries out the reaction L-arginine(in) = L-arginine(out). The catalysed reaction is L-lysine(in) = L-lysine(out). The enzyme catalyses L-ornithine(in) = L-ornithine(out). Its activity is regulated as follows. Inhibited by high potassium ions-induced membrane depolarization. Uniporter that mediates the uptake of cationic L-amino acids such as L-arginine, L-lysine and L-ornithine. The transport is sodium ions- and pH-independent, moderately trans-stimulated and is mediated by passive diffusion. The polypeptide is Cationic amino acid transporter 3 (Rattus norvegicus (Rat)).